A 305-amino-acid polypeptide reads, in one-letter code: tRNA uridine(34) hydroxylase (305 aa).

Residues 125–219 (ADENTVVVDK…YLEEVPREQS (95 aa)) form the Rhodanese domain. C179 functions as the Cysteine persulfide intermediate in the catalytic mechanism.

This sequence belongs to the TrhO family.

It catalyses the reaction uridine(34) in tRNA + AH2 + O2 = 5-hydroxyuridine(34) in tRNA + A + H2O. Functionally, catalyzes oxygen-dependent 5-hydroxyuridine (ho5U) modification at position 34 in tRNAs. The sequence is that of tRNA uridine(34) hydroxylase from Brucella abortus (strain S19).